The following is a 339-amino-acid chain: DNA-directed RNA polymerase subunit alpha (339 aa).

The tract at residues 1–235 is alpha N-terminal domain (alpha-NTD); sequence MTIQKNWQEL…DQLNVFVNFE (235 aa). Residues 251–339 are alpha C-terminal domain (alpha-CTD); it reads FNPAFLKKVD…ELAKRFEDHY (89 aa).

It belongs to the RNA polymerase alpha chain family. As to quaternary structure, homodimer. The RNAP catalytic core consists of 2 alpha, 1 beta, 1 beta' and 1 omega subunit. When a sigma factor is associated with the core the holoenzyme is formed, which can initiate transcription.

The catalysed reaction is RNA(n) + a ribonucleoside 5'-triphosphate = RNA(n+1) + diphosphate. Its function is as follows. DNA-dependent RNA polymerase catalyzes the transcription of DNA into RNA using the four ribonucleoside triphosphates as substrates. This chain is DNA-directed RNA polymerase subunit alpha, found in Rhodopseudomonas palustris (strain BisB5).